The primary structure comprises 444 residues: N-succinylarginine dihydrolase (444 aa).

Residues A19–S28, N110, and H137–R138 each bind substrate. Residue E174 is part of the active site. R214 lines the substrate pocket. H250 is an active-site residue. Substrate contacts are provided by D252 and N362. The active-site Nucleophile is the C368.

It belongs to the succinylarginine dihydrolase family. As to quaternary structure, homodimer.

It carries out the reaction N(2)-succinyl-L-arginine + 2 H2O + 2 H(+) = N(2)-succinyl-L-ornithine + 2 NH4(+) + CO2. Its pathway is amino-acid degradation; L-arginine degradation via AST pathway; L-glutamate and succinate from L-arginine: step 2/5. Catalyzes the hydrolysis of N(2)-succinylarginine into N(2)-succinylornithine, ammonia and CO(2). This chain is N-succinylarginine dihydrolase, found in Shewanella baltica (strain OS223).